The chain runs to 152 residues: Deoxyuridine 5'-triphosphate nucleotidohydrolase (152 aa).

Substrate is bound by residues 71 to 73, Asn84, 88 to 90, and Met98; these read RSG and LID.

The protein belongs to the dUTPase family. Mg(2+) is required as a cofactor.

It catalyses the reaction dUTP + H2O = dUMP + diphosphate + H(+). It functions in the pathway pyrimidine metabolism; dUMP biosynthesis; dUMP from dCTP (dUTP route): step 2/2. This enzyme is involved in nucleotide metabolism: it produces dUMP, the immediate precursor of thymidine nucleotides and it decreases the intracellular concentration of dUTP so that uracil cannot be incorporated into DNA. In Shigella flexneri, this protein is Deoxyuridine 5'-triphosphate nucleotidohydrolase.